Consider the following 374-residue polypeptide: MSGRSCKGPFKILVLPGDGIGPEIIKEAVKVLKALGEKKGITFNFQYGLIGGAAIDERGVPLPEETVELGKQCDAILLGAVGGPKWDNLPPEIRPELGGLLKIRKVFDLYANLRPVMFFPELKNASPLKPDIIEGVDILMVRELTGGLYFGEKKRFTTEQGEQAVIDTLIYTEKEVERVVRLGFELAQKRRGKLTLVDKANVLESSRFWREITGEIKKEYPDVELSYMYVDNCAMQLIRNPRQFDVIVTENMFGDILTDEGSVLAGSIGLLPSASLNGKFGLYEPIHGSAPDIAGQNKANPLATILSAGMMLRYSLDCPEEALLIEKAVKAVLQKGYRTGDILEPGTTLVTCEEMGDLVAEEILGGVYDEGLPL.

83 to 96 (GPKWDNLPPEIRPE) is an NAD(+) binding site. 4 residues coordinate substrate: R104, R114, R142, and D231. 3 residues coordinate Mg(2+): D231, D255, and D259. Residue 288 to 300 (GSAPDIAGQNKAN) participates in NAD(+) binding.

Belongs to the isocitrate and isopropylmalate dehydrogenases family. LeuB type 1 subfamily. In terms of assembly, homodimer. Mg(2+) serves as cofactor. Mn(2+) is required as a cofactor.

The protein localises to the cytoplasm. The enzyme catalyses (2R,3S)-3-isopropylmalate + NAD(+) = 4-methyl-2-oxopentanoate + CO2 + NADH. It functions in the pathway amino-acid biosynthesis; L-leucine biosynthesis; L-leucine from 3-methyl-2-oxobutanoate: step 3/4. In terms of biological role, catalyzes the oxidation of 3-carboxy-2-hydroxy-4-methylpentanoate (3-isopropylmalate) to 3-carboxy-4-methyl-2-oxopentanoate. The product decarboxylates to 4-methyl-2 oxopentanoate. This is 3-isopropylmalate dehydrogenase from Carboxydothermus hydrogenoformans (strain ATCC BAA-161 / DSM 6008 / Z-2901).